Reading from the N-terminus, the 66-residue chain is Large ribosomal subunit protein bL28 (66 aa).

The protein belongs to the bacterial ribosomal protein bL28 family.

This Oenococcus oeni (strain ATCC BAA-331 / PSU-1) protein is Large ribosomal subunit protein bL28.